Reading from the N-terminus, the 33-residue chain is GLMSVLKKAGKHVAKNVAVSLMDSLKCKISGGC.

A disulfide bond links C27 and C33.

As to expression, expressed by the skin glands.

The protein localises to the secreted. In terms of biological role, has antibacterial activity. The polypeptide is Brevinin 2AV (Rana arvalis (Moor frog)).